Reading from the N-terminus, the 181-residue chain is UPF0302 protein ABC1905 (181 aa).

It belongs to the UPF0302 family.

In Shouchella clausii (strain KSM-K16) (Alkalihalobacillus clausii), this protein is UPF0302 protein ABC1905.